The sequence spans 338 residues: Anthocyanidin reductase ((2S)-flavan-3-ol-forming) (338 aa).

NADP(+)-binding positions include 18 to 21 (TGFV), K48, 87 to 90 (VATP), and Y168.

Belongs to the NAD(P)-dependent epimerase/dehydratase family. Dihydroflavonol-4-reductase subfamily. As to expression, expressed in leaves and grape berries.

It carries out the reaction a (2S,3R)-flavan-3-ol + 2 NADP(+) = an anthocyanidin with a 3-hydroxy group + 2 NADPH + 2 H(+). The enzyme catalyses a (2S,3S)-flavan-3-ol + 2 NADP(+) = an anthocyanidin with a 3-hydroxy group + 2 NADPH + 2 H(+). It functions in the pathway secondary metabolite biosynthesis; flavonoid biosynthesis. In terms of biological role, produces the terminal flavan-3-ol monomers required for the formation of proanthocyanidins or condensed tannins in leaves and flowers, as well as in the skin and seeds of developing berries. Behaves as a reductase and as a C-3 epimerase. Catalyzes the double reduction of anthocyanidins, producing a mixture of (2S,3S)- and (2S,3R)-flavan-3-ols. The enzyme catalyzes sequential hydride transfers to C-2 and C-4, respectively and epimerization at C-3 is achieved by tautomerization that occurs between the two hydride transfers. Converts cyanidin, pelargonidin and delphinidin into catechin and epicatechin, afzelechin and epiafzelechin, and gallocatechin and epigallocatechin respectively. The chain is Anthocyanidin reductase ((2S)-flavan-3-ol-forming) from Vitis vinifera (Grape).